A 676-amino-acid polypeptide reads, in one-letter code: Periplasmic alpha-amylase (676 aa).

The signal sequence occupies residues 1–17; that stretch reads MKLAACFLTLLPGFAVA. Intrachain disulfides connect cysteine 57–cysteine 75 and cysteine 121–cysteine 537. Residue asparagine 314 participates in Ca(2+) binding. Aspartate 460 functions as the Nucleophile in the catalytic mechanism. Histidine 464 is a Ca(2+) binding site. Glutamate 503 (proton donor) is an active-site residue.

This sequence belongs to the glycosyl hydrolase 13 family. In terms of assembly, monomer. Ca(2+) is required as a cofactor.

The protein localises to the periplasm. The catalysed reaction is Endohydrolysis of (1-&gt;4)-alpha-D-glucosidic linkages in polysaccharides containing three or more (1-&gt;4)-alpha-linked D-glucose units.. Functionally, since only maltooligosaccharides up to a chain length of 6 glucose units are actively transported through the cytoplasmic membrane via the membrane-bound complex of three proteins, MalF, MalG, and MalK, longer maltooligosaccharides must first be degraded by the periplasmic alpha-amylase, the MalS protein. This chain is Periplasmic alpha-amylase (malS), found in Escherichia coli (strain K12).